Consider the following 141-residue polypeptide: MAIERTLSIVKPDAVEKNIIGKVISRFEKAGLKIVAAKMMHLTEEKARGFYAEHEGRPFFAGLVEFMTSGPVVVQVLEGENAIALNRELMGATNPAEAAEGTLRKDFADSVGRNAVYGSDSPASAEREINYFFDASEICPR.

Lys11, Phe59, Arg87, Thr93, Arg104, and Asn114 together coordinate ATP.

Belongs to the NDK family. As to quaternary structure, homotetramer. The cofactor is Mg(2+).

The protein resides in the cytoplasm. It catalyses the reaction a 2'-deoxyribonucleoside 5'-diphosphate + ATP = a 2'-deoxyribonucleoside 5'-triphosphate + ADP. The catalysed reaction is a ribonucleoside 5'-diphosphate + ATP = a ribonucleoside 5'-triphosphate + ADP. Its function is as follows. Major role in the synthesis of nucleoside triphosphates other than ATP. The ATP gamma phosphate is transferred to the NDP beta phosphate via a ping-pong mechanism, using a phosphorylated active-site intermediate. This Saccharophagus degradans (strain 2-40 / ATCC 43961 / DSM 17024) protein is Nucleoside diphosphate kinase.